The sequence spans 379 residues: Cell division protein FtsZ (379 aa).

Residues glycine 18–asparagine 22, glycine 105–glycine 107, glutamate 136, arginine 140, and aspartate 184 each bind GTP.

The protein belongs to the FtsZ family. Homodimer. Polymerizes to form a dynamic ring structure in a strictly GTP-dependent manner. Interacts directly with several other division proteins.

It localises to the cytoplasm. Its function is as follows. Essential cell division protein that forms a contractile ring structure (Z ring) at the future cell division site. The regulation of the ring assembly controls the timing and the location of cell division. One of the functions of the FtsZ ring is to recruit other cell division proteins to the septum to produce a new cell wall between the dividing cells. Binds GTP and shows GTPase activity. The protein is Cell division protein FtsZ of Mycobacterium leprae (strain TN).